We begin with the raw amino-acid sequence, 474 residues long: Aspartate ammonia-lyase (474 aa).

Thr-105, Ser-144, Thr-145, Asn-146, and Thr-191 together coordinate L-aspartate. The interval Gly-322 to Asn-331 is SS loop. Ser-323 serves as the catalytic Proton acceptor. Ser-324 and Lys-329 together coordinate L-aspartate.

The protein belongs to the class-II fumarase/aspartase family. Aspartase subfamily. As to quaternary structure, homotetramer.

The catalysed reaction is L-aspartate = fumarate + NH4(+). It carries out the reaction L-phenylalanine = (E)-cinnamate + NH4(+). Does not require any divalent metal ion for activation of catalysis, but the activity is slightly increased in the presence of Mg(2+), Mn(2+), Ca(2+) or Co(2+). Its function is as follows. Catalyzes the reversible conversion of L-aspartate to fumarate and ammonia. Can also utilize L-phenylalanine to form cinnamic acid. Exhibits the highest specific activity towards L-phenylalanine, but catalytic efficiency is 3-fold higher with L-aspartate. The polypeptide is Aspartate ammonia-lyase (Pseudomonas aeruginosa (strain ATCC 15692 / DSM 22644 / CIP 104116 / JCM 14847 / LMG 12228 / 1C / PRS 101 / PAO1)).